Reading from the N-terminus, the 231-residue chain is Large ribosomal subunit protein uL1 (231 aa).

Belongs to the universal ribosomal protein uL1 family. Part of the 50S ribosomal subunit.

Its function is as follows. Binds directly to 23S rRNA. The L1 stalk is quite mobile in the ribosome, and is involved in E site tRNA release. Protein L1 is also a translational repressor protein, it controls the translation of the L11 operon by binding to its mRNA. The protein is Large ribosomal subunit protein uL1 of Pseudomonas aeruginosa (strain LESB58).